The following is a 207-amino-acid chain: Protein GrpE (207 aa).

Basic and acidic residues-rich tracts occupy residues 1–11 (MEENRDVKNEE) and 57–66 (DLVKNQEEEN). A disordered region spans residues 1 to 66 (MEENRDVKNE…DLVKNQEEEN (66 aa)).

Belongs to the GrpE family. Homodimer.

Its subcellular location is the cytoplasm. In terms of biological role, participates actively in the response to hyperosmotic and heat shock by preventing the aggregation of stress-denatured proteins, in association with DnaK and GrpE. It is the nucleotide exchange factor for DnaK and may function as a thermosensor. Unfolded proteins bind initially to DnaJ; upon interaction with the DnaJ-bound protein, DnaK hydrolyzes its bound ATP, resulting in the formation of a stable complex. GrpE releases ADP from DnaK; ATP binding to DnaK triggers the release of the substrate protein, thus completing the reaction cycle. Several rounds of ATP-dependent interactions between DnaJ, DnaK and GrpE are required for fully efficient folding. The polypeptide is Protein GrpE (Clostridium beijerinckii (strain ATCC 51743 / NCIMB 8052) (Clostridium acetobutylicum)).